The sequence spans 827 residues: Leucine--tRNA ligase (827 aa).

Positions 42–52 (PYPSGNLHMGH) match the 'HIGH' region motif. The short motif at 583–587 (KMSKS) is the 'KMSKS' region element. Lys-586 is an ATP binding site.

Belongs to the class-I aminoacyl-tRNA synthetase family.

It is found in the cytoplasm. It carries out the reaction tRNA(Leu) + L-leucine + ATP = L-leucyl-tRNA(Leu) + AMP + diphosphate. In Desulfitobacterium hafniense (strain DSM 10664 / DCB-2), this protein is Leucine--tRNA ligase.